A 347-amino-acid polypeptide reads, in one-letter code: Quinolinate synthase (347 aa).

Iminosuccinate-binding residues include His47 and Ser68. Cys113 provides a ligand contact to [4Fe-4S] cluster. Iminosuccinate-binding positions include 139 to 141 and Ser156; that span reads YAN. A [4Fe-4S] cluster-binding site is contributed by Cys200. Residues 226–228 and Thr243 contribute to the iminosuccinate site; that span reads HPE. Cys297 is a [4Fe-4S] cluster binding site.

Belongs to the quinolinate synthase family. Type 1 subfamily. It depends on [4Fe-4S] cluster as a cofactor.

It localises to the cytoplasm. It carries out the reaction iminosuccinate + dihydroxyacetone phosphate = quinolinate + phosphate + 2 H2O + H(+). Its pathway is cofactor biosynthesis; NAD(+) biosynthesis; quinolinate from iminoaspartate: step 1/1. Functionally, catalyzes the condensation of iminoaspartate with dihydroxyacetone phosphate to form quinolinate. In Escherichia coli O157:H7, this protein is Quinolinate synthase.